The sequence spans 141 residues: HTH-type transcriptional repressor NsrR (141 aa).

Positions 2–129 constitute an HTH rrf2-type domain; sequence QLTSFTDYAL…DDCSIAELLD (128 aa). The H-T-H motif DNA-binding region spans 28–51; it reads ITDVTELFGVSRNHMVKVINRLGQ. [2Fe-2S] cluster contacts are provided by Cys91, Cys96, and Cys102.

It depends on [2Fe-2S] cluster as a cofactor.

Functionally, nitric oxide-sensitive repressor of genes involved in protecting the cell against nitrosative stress. May require iron for activity. This is HTH-type transcriptional repressor NsrR from Vibrio vulnificus (strain CMCP6).